Here is a 445-residue protein sequence, read N- to C-terminus: Na(+)-translocating NADH-quinone reductase subunit A (445 aa).

This sequence belongs to the NqrA family. Composed of six subunits; NqrA, NqrB, NqrC, NqrD, NqrE and NqrF.

The enzyme catalyses a ubiquinone + n Na(+)(in) + NADH + H(+) = a ubiquinol + n Na(+)(out) + NAD(+). Functionally, NQR complex catalyzes the reduction of ubiquinone-1 to ubiquinol by two successive reactions, coupled with the transport of Na(+) ions from the cytoplasm to the periplasm. NqrA to NqrE are probably involved in the second step, the conversion of ubisemiquinone to ubiquinol. This Marinomonas sp. (strain MWYL1) protein is Na(+)-translocating NADH-quinone reductase subunit A.